The primary structure comprises 538 residues: Chaperonin GroEL (538 aa).

ATP contacts are provided by residues 29–32 (TIGP), 86–90 (DGTTT), G413, 476–478 (NAA), and D492.

Belongs to the chaperonin (HSP60) family. As to quaternary structure, forms a cylinder of 14 subunits composed of two heptameric rings stacked back-to-back. Interacts with the co-chaperonin GroES.

Its subcellular location is the cytoplasm. The enzyme catalyses ATP + H2O + a folded polypeptide = ADP + phosphate + an unfolded polypeptide.. Its function is as follows. Together with its co-chaperonin GroES, plays an essential role in assisting protein folding. The GroEL-GroES system forms a nano-cage that allows encapsulation of the non-native substrate proteins and provides a physical environment optimized to promote and accelerate protein folding. In Staphylococcus aureus (strain MRSA252), this protein is Chaperonin GroEL.